The following is a 302-amino-acid chain: Putative peptide permease protein BOV_A0350 (302 aa).

Residues 1-22 (MRSSIHASRLRKMGQSIPASTG) are disordered. 6 helical membrane passes run 38 to 58 (IFGL…PLWL), 101 to 121 (LLVA…IGAI), 147 to 167 (IFLL…VVVI), 200 to 222 (AGLG…VVYA), 230 to 250 (ILLE…AASW), and 268 to 288 (WQWL…NFIG). Residues 97–288 (GRISLLVAVS…LAVLAINFIG (192 aa)) form the ABC transmembrane type-1 domain.

It belongs to the binding-protein-dependent transport system permease family. The complex is composed of two ATP-binding proteins (BOV_A0347 and BOV_A0348), two transmembrane proteins (BOV_A0350 and BOV_A0351) and a solute-binding protein (BOV_A0352).

It localises to the cell inner membrane. In terms of biological role, probably part of an ABC transporter complex that could be involved in peptide import. Probably responsible for the translocation of the substrate across the membrane. The protein is Putative peptide permease protein BOV_A0350 of Brucella ovis (strain ATCC 25840 / 63/290 / NCTC 10512).